We begin with the raw amino-acid sequence, 231 residues long: Endo-1,4-beta-xylanase 4 (231 aa).

Residues 1-18 (MVSFTTILVAATAALVAA) form the signal peptide. Positions 42-230 (GGTPSSTGTH…SSGSSTVTIQ (189 aa)) constitute a GH11 domain. The N-linked (GlcNAc...) asparagine glycan is linked to Asn99. Catalysis depends on Glu126, which acts as the Nucleophile. Residue Glu217 is the Proton donor of the active site.

Belongs to the glycosyl hydrolase 11 (cellulase G) family.

The protein resides in the secreted. The enzyme catalyses Endohydrolysis of (1-&gt;4)-beta-D-xylosidic linkages in xylans.. Its pathway is glycan degradation; xylan degradation. Functionally, endo-1,4-beta-xylanase involved in the hydrolysis of xylan, a major structural heterogeneous polysaccharide found in plant biomass representing the second most abundant polysaccharide in the biosphere, after cellulose. This chain is Endo-1,4-beta-xylanase 4 (XYL4), found in Pyricularia grisea (Crabgrass-specific blast fungus).